The sequence spans 83 residues: Apolipoprotein C-I, acidic form (83 aa).

A signal peptide spans 1-26; sequence MRLFLSLPVLVVVLSIVLEGPAPAQG.

Belongs to the apolipoprotein C1 family.

The protein resides in the secreted. In Pan paniscus (Pygmy chimpanzee), this protein is Apolipoprotein C-I, acidic form (APOC1A).